A 254-amino-acid chain; its full sequence is 3-deoxy-manno-octulosonate cytidylyltransferase (254 aa).

Belongs to the KdsB family.

The protein resides in the cytoplasm. The enzyme catalyses 3-deoxy-alpha-D-manno-oct-2-ulosonate + CTP = CMP-3-deoxy-beta-D-manno-octulosonate + diphosphate. It functions in the pathway nucleotide-sugar biosynthesis; CMP-3-deoxy-D-manno-octulosonate biosynthesis; CMP-3-deoxy-D-manno-octulosonate from 3-deoxy-D-manno-octulosonate and CTP: step 1/1. The protein operates within bacterial outer membrane biogenesis; lipopolysaccharide biosynthesis. Its function is as follows. Activates KDO (a required 8-carbon sugar) for incorporation into bacterial lipopolysaccharide in Gram-negative bacteria. This chain is 3-deoxy-manno-octulosonate cytidylyltransferase, found in Bordetella bronchiseptica (strain ATCC BAA-588 / NCTC 13252 / RB50) (Alcaligenes bronchisepticus).